Consider the following 427-residue polypeptide: Diaminobutyrate--2-oxoglutarate transaminase (427 aa).

Lys269 carries the post-translational modification N6-(pyridoxal phosphate)lysine.

Belongs to the class-III pyridoxal-phosphate-dependent aminotransferase family. Requires pyridoxal 5'-phosphate as cofactor.

It catalyses the reaction L-2,4-diaminobutanoate + 2-oxoglutarate = L-aspartate 4-semialdehyde + L-glutamate. The protein operates within amine and polyamine biosynthesis; ectoine biosynthesis; L-ectoine from L-aspartate 4-semialdehyde: step 1/3. Functionally, catalyzes reversively the conversion of L-aspartate beta-semialdehyde (ASA) to L-2,4-diaminobutyrate (DABA) by transamination with L-glutamate. The polypeptide is Diaminobutyrate--2-oxoglutarate transaminase (ectB) (Halalkalibacterium halodurans (strain ATCC BAA-125 / DSM 18197 / FERM 7344 / JCM 9153 / C-125) (Bacillus halodurans)).